Here is a 908-residue protein sequence, read N- to C-terminus: DNA polymerase I (908 aa).

Positions 1 to 318 (MKELYLIDAL…DDINTIDTEN (318 aa)) constitute a 5'-3' exonuclease domain. The 213-residue stretch at 319–531 (VKYRSITTKI…MEENGIYLDK (213 aa)) folds into the 3'-5' exonuclease domain. Positions 532–908 (EYLKEYGKEL…ETGKSWGEIH (377 aa)) are polymerase.

This sequence belongs to the DNA polymerase type-A family.

It catalyses the reaction DNA(n) + a 2'-deoxyribonucleoside 5'-triphosphate = DNA(n+1) + diphosphate. Functionally, in addition to polymerase activity, this DNA polymerase exhibits 3'-5' and 5'-3' exonuclease activity. This Borreliella burgdorferi (strain ATCC 35210 / DSM 4680 / CIP 102532 / B31) (Borrelia burgdorferi) protein is DNA polymerase I (polA).